The chain runs to 120 residues: MKVDRKTATHRRHQRIRRKIAGTPEQPRLAVYRSNRHIYAQVIDDVHQRTLVAASTLEAPLRSGEEGTATCEAATAVGRLVAERAKEKGITAVVFDRGGKLYHGRVKAVADAAREAGLDF.

Positions 1–22 are disordered; sequence MKVDRKTATHRRHQRIRRKIAG. Basic residues predominate over residues 8–20; it reads ATHRRHQRIRRKI.

This sequence belongs to the universal ribosomal protein uL18 family. Part of the 50S ribosomal subunit; part of the 5S rRNA/L5/L18/L25 subcomplex. Contacts the 5S and 23S rRNAs.

Functionally, this is one of the proteins that bind and probably mediate the attachment of the 5S RNA into the large ribosomal subunit, where it forms part of the central protuberance. The protein is Large ribosomal subunit protein uL18 of Gloeobacter violaceus (strain ATCC 29082 / PCC 7421).